The primary structure comprises 260 residues: MIETYSQTAPRSVAPGPPVSMKIFMYLLTVFLITQMIGSALFAVYLHRRLDKIEDERNLYEDFVFMKTLQKCNKGEGALSLLNCEEIKSRFEAFLKEIMLNKETKKEKNVAMQKGDQDPRVAAHVISEASSSTASVLQWAPKGYYTISSNLVTLENGKQLAVKRQGLYYIYAQVTFCSNREASSQAPFIASLCLHSPSGSERVLLRAANARSSSKPCGQQSIHLGGVFELHPGASVFVNVTDPSQVSHGTGFTSFGLLKL.

The Cytoplasmic segment spans residues 1 to 22; the sequence is MIETYSQTAPRSVAPGPPVSMK. Residues 23-46 traverse the membrane as a helical; Signal-anchor for type II membrane protein segment; the sequence is IFMYLLTVFLITQMIGSALFAVYL. The Extracellular segment spans residues 47-260; the sequence is HRRLDKIEDE…GFTSFGLLKL (214 aa). In terms of domain architecture, THD spans 121–260; it reads VAAHVISEAS…GFTSFGLLKL (140 aa). Cysteines 177 and 217 form a disulfide. An N-linked (GlcNAc...) asparagine glycan is attached at Asn-239.

The protein belongs to the tumor necrosis factor family. In terms of assembly, homotrimer. Interacts with CD28. CD40 ligand, soluble form: Exists as either a monomer or a homotrimer. Forms a ternary complex between CD40 and integrins for CD40-CD40LG signaling. Post-translationally, the soluble form derives from the membrane form by proteolytic processing.

The protein localises to the cell membrane. Its subcellular location is the cell surface. It is found in the secreted. Its function is as follows. Cytokine that acts as a ligand to CD40/TNFRSF5. Costimulates T-cell proliferation and cytokine production. Its cross-linking on T-cells generates a costimulatory signal which enhances the production of IL4 and IL10 in conjunction with the TCR/CD3 ligation and CD28 costimulation. Induces the activation of NF-kappa-B. Induces the activation of kinases MAPK8 and PAK2 in T-cells. Mediates B-cell proliferation in the absence of co-stimulus as well as IgE production in the presence of IL4. Involved in immunoglobulin class switching. Acts as a ligand for integrins, specifically ITGA5:ITGB1 and ITGAV:ITGB3; both integrins and the CD40 receptor are required for activation of CD40-CD40LG signaling, which have cell-type dependent effects, such as B-cell activation, NF-kappa-B signaling and anti-apoptotic signaling. This is CD40 ligand (CD40LG) from Felis catus (Cat).